Consider the following 330-residue polypeptide: Quinone oxidoreductase (330 aa).

Ala-2 is subject to N-acetylalanine. The residue at position 23 (Lys-23) is an N6-acetyllysine. Residues Tyr-53, 158–161 (SGGV), Gly-181, His-200, Asn-229, 246–249 (VGSK), and 269–271 (VTL) each bind NADP(+). Ser-248 carries the post-translational modification Phosphoserine.

Belongs to the zinc-containing alcohol dehydrogenase family. Quinone oxidoreductase subfamily. In terms of assembly, homotetramer.

It is found in the cytoplasm. It carries out the reaction 2 a quinone + NADPH + H(+) = 2 a 1,4-benzosemiquinone + NADP(+). In terms of biological role, does not have alcohol dehydrogenase activity. Binds NADP and acts through a one-electron transfer process. Orthoquinones, such as 1,2-naphthoquinone or 9,10-phenanthrenequinone, are the best substrates (in vitro). May act in the detoxification of xenobiotics. Interacts with (AU)-rich elements (ARE) in the 3'-UTR of target mRNA species and enhances their stability. NADPH binding interferes with mRNA binding. This is Quinone oxidoreductase (CRYZ) from Lama guanicoe (Guanaco).